A 1096-amino-acid chain; its full sequence is MAEGAASREAPAPLDVAGGEDDPRAGADAASGDAPPPALGGRMRDRRSGVALPGAAGVPADSEAGLLEAARATPRRSSIIKDPSNQKCGGRKKTVSFSSMPSEKKISSAHDCISFMQAGCELKKVRPNSRIYNRFFTLDTDLQALRWEPSKKDLEKAKLDISAIKEIRLGKNTETFRNNGLADQICEDCAFSILHGENYESLDLVANSADVANIWVSGLRYLVSRSKQPLDFIEGNQNTPRFMWLKTVFEAADVDGNGIMLEDTSVELIKQLNPTLKESKIRLKFKEIQKSKEKLTTRVTEEEFCEAFCELCTRPEVYFLLVQISKNKEYLDANDLMLFLEAEQGVTHITEDMCLDIIRRYELSEDGRQKGFLAIDGFTQYLLSPECDIFDPEQKKVAQDMTQPLSHYYINASHNTYLIEDQFRGPADINGYVRALKMGCRSIELDVSDGPDNEPILCNRNNMAMHLSFRSVLEVINKFAFVASEYPLILCLGNHCSLPQQKVMAQQMKKVFGEKLYTEAPLSSESYLPSPEKLKNMIIVKGKKLPSESDLLEGEVTDEDEEAEMSRRMSGDYNGEQKHIWLCRELSDLVSICKSVQHRDFELSMKTQNYWEMCSFSETEASRIANEYPEDFVNYNKKFLSRVYPSAMRIDSSNLNPQDFWNCGCQIVAMNFQTPGPMMDLHTGWFLQNGGCGYVLRPSIMRDEVSYFSANTKGIVPGVSPLVLHIKIISGQNFPKPKGACAKGDVIDPYVCVEIHGIPADCCEQRTKTVQQNSDNPIFDETFEFQVNLPELTMVRFVILDDDYIGDEFIGQYTIPFECLQPGYRHVPLRSFVGDIMEHVTLFVHIAITNRSGGGKPQKRSLSVRMGKKVREYTMLRNIGLKTIDDIFKIAVHPLREAIDMRENMQNAIVSVKELCGLPPIASLKQCLLTLSSRLITSDSTPSVSLVMKDCFPYLEPLGAIPDVQKRMLAAYDLMIQESRVLIEMADTVQEKIVQCQKAGMEFHEELHNLGAKEGLKGRKLNKAIESFAWNITVLKGQGDLLKNAKNEAVENIKQIQLACLSCGLSKGPGGGSEAKGKRSLEAIEEKESSEENGKL.

The interval 1 to 101 (MAEGAASREA…KKTVSFSSMP (101 aa)) is disordered. Position 48 is a phosphoserine (Ser-48). The segment covering 49-60 (GVALPGAAGVPA) has biased composition (low complexity). Ser-78 is modified (phosphoserine). The segment at 83–222 (PSNQKCGGRK…NIWVSGLRYL (140 aa)) is interaction with PPP1C. Thr-94 carries the post-translational modification Phosphothreonine. Thr-94 is subject to Phosphothreonine; by PKA. Ser-96 carries the phosphoserine; by PKA modification. Residues 114 to 224 (SFMQAGCELK…WVSGLRYLVS (111 aa)) form the PH domain. One can recognise a PI-PLC X-box domain in the interval 399 to 543 (QDMTQPLSHY…LKNMIIVKGK (145 aa)). Residues 544–568 (KLPSESDLLEGEVTDEDEEAEMSRR) are interaction with GABA A beta subunit. Residues 550 to 563 (DLLEGEVTDEDEEA) show a composition bias toward acidic residues. A disordered region spans residues 550 to 569 (DLLEGEVTDEDEEAEMSRRM). Thr-557 carries the post-translational modification Phosphothreonine. Ser-570 is modified (phosphoserine). Positions 586 to 702 (LSDLVSICKS…GYVLRPSIMR (117 aa)) constitute a PI-PLC Y-box domain. One can recognise a C2 domain in the interval 702 to 831 (RDEVSYFSAN…PGYRHVPLRS (130 aa)). Residues 1040 to 1060 (DLLKNAKNEAVENIKQIQLAC) are a coiled coil. A disordered region spans residues 1067 to 1096 (KGPGGGSEAKGKRSLEAIEEKESSEENGKL). Positions 1075–1096 (AKGKRSLEAIEEKESSEENGKL) are enriched in basic and acidic residues. Residue Ser-1080 is modified to Phosphoserine.

As to quaternary structure, interacts with PPP2CA, Ins(1,4,5)P3, Ins(1,4,5,6)P4 GABARAP, GABA receptor beta subunits, GABA receptor gamma-2 subunits and PPP1C. May form a ternary complex with GABA receptor beta subunit and GABARAP. The formation of a ternary complex with GABA receptor beta subunit and GABARAP could be the key step for facilitating the association of GABARAP with the GABA receptor gamma-2 subunit and to allow it to be transported at the right destination. Post-translationally, phosphorylated by the catalytic subunit of PKA. Phosphorylation of Thr-94 resulted in dissociation of PPP1C from PRIP1.

Its subcellular location is the cytoplasm. In terms of biological role, involved in an inositol phospholipid-based intracellular signaling cascade. Shows no PLC activity to phosphatidylinositol 4,5-bisphosphate and phosphatidylinositol. Component in the phospho-dependent endocytosis process of GABA A receptor. Acts as an inhibitor of PPP1C. Involved in the assembly and/or the trafficking of gamma-2 subunit-containing GABA A receptors. In Mus musculus (Mouse), this protein is Inactive phospholipase C-like protein 1 (Plcl1).